The primary structure comprises 173 residues: U4/U6.U5 small nuclear ribonucleoprotein component snu23 (173 aa).

The segment at 55-85 (WYCEACNETYKDSLSWLDHLNSTQHLRKTRT) adopts a Matrin-type zinc-finger fold. A coiled-coil region spans residues 119 to 149 (SLKERVERYHQELEAKKLRRKQKKVNKEKNS).

Component of the 25S U4/U6.U5 tri-snRNP particle, a subcomplex of the spliceosome.

The protein resides in the cytoplasm. The protein localises to the cytoskeleton. It is found in the microtubule organizing center. Its subcellular location is the spindle pole body. It localises to the nucleus. The protein is U4/U6.U5 small nuclear ribonucleoprotein component snu23 (snu23) of Schizosaccharomyces pombe (strain 972 / ATCC 24843) (Fission yeast).